Here is a 329-residue protein sequence, read N- to C-terminus: Beta-ketoacyl-[acyl-carrier-protein] synthase III (329 aa).

Catalysis depends on residues cysteine 114 and histidine 254. Residues 255–259 (QANLR) are ACP-binding. Asparagine 284 is a catalytic residue.

The protein belongs to the thiolase-like superfamily. FabH family. In terms of assembly, homodimer.

It is found in the cytoplasm. It carries out the reaction malonyl-[ACP] + acetyl-CoA + H(+) = 3-oxobutanoyl-[ACP] + CO2 + CoA. It participates in lipid metabolism; fatty acid biosynthesis. Catalyzes the condensation reaction of fatty acid synthesis by the addition to an acyl acceptor of two carbons from malonyl-ACP. Catalyzes the first condensation reaction which initiates fatty acid synthesis and may therefore play a role in governing the total rate of fatty acid production. Possesses both acetoacetyl-ACP synthase and acetyl transacylase activities. Its substrate specificity determines the biosynthesis of branched-chain and/or straight-chain of fatty acids. In Roseiflexus sp. (strain RS-1), this protein is Beta-ketoacyl-[acyl-carrier-protein] synthase III.